A 169-amino-acid chain; its full sequence is Large ribosomal subunit protein uL18 (169 aa).

Belongs to the universal ribosomal protein uL18 family. In terms of assembly, part of the 50S ribosomal subunit. Contacts the 5S and 23S rRNAs.

In terms of biological role, this is one of the proteins that bind and probably mediate the attachment of the 5S RNA into the large ribosomal subunit, where it forms part of the central protuberance. This chain is Large ribosomal subunit protein uL18, found in Methanothrix thermoacetophila (strain DSM 6194 / JCM 14653 / NBRC 101360 / PT) (Methanosaeta thermophila).